A 191-amino-acid chain; its full sequence is Crossover junction endodeoxyribonuclease RuvC (191 aa).

Active-site residues include aspartate 7, glutamate 67, and aspartate 140. Mg(2+) is bound by residues aspartate 7, glutamate 67, and aspartate 140.

It belongs to the RuvC family. Homodimer which binds Holliday junction (HJ) DNA. The HJ becomes 2-fold symmetrical on binding to RuvC with unstacked arms; it has a different conformation from HJ DNA in complex with RuvA. In the full resolvosome a probable DNA-RuvA(4)-RuvB(12)-RuvC(2) complex forms which resolves the HJ. The cofactor is Mg(2+).

It localises to the cytoplasm. The enzyme catalyses Endonucleolytic cleavage at a junction such as a reciprocal single-stranded crossover between two homologous DNA duplexes (Holliday junction).. Functionally, the RuvA-RuvB-RuvC complex processes Holliday junction (HJ) DNA during genetic recombination and DNA repair. Endonuclease that resolves HJ intermediates. Cleaves cruciform DNA by making single-stranded nicks across the HJ at symmetrical positions within the homologous arms, yielding a 5'-phosphate and a 3'-hydroxyl group; requires a central core of homology in the junction. The consensus cleavage sequence is 5'-(A/T)TT(C/G)-3'. Cleavage occurs on the 3'-side of the TT dinucleotide at the point of strand exchange. HJ branch migration catalyzed by RuvA-RuvB allows RuvC to scan DNA until it finds its consensus sequence, where it cleaves and resolves the cruciform DNA. This Pelodictyon phaeoclathratiforme (strain DSM 5477 / BU-1) protein is Crossover junction endodeoxyribonuclease RuvC.